We begin with the raw amino-acid sequence, 398 residues long: DNA-directed RNA polymerase III subunit RPC4 (398 aa).

Residues 1 to 149 (MSEGNAAGEP…IKKEKRETDE (149 aa)) are disordered. Ser-2 is subject to N-acetylserine. The residue at position 42 (Ser-42) is a Phosphoserine. Basic and acidic residues-rich tracts occupy residues 66-100 (KIKEEPKEEVTMKKEKRERDRDRQREGHGRGRGRP), 116-128 (MMKKKGNWDKTVD), and 140-149 (IKKEKRETDE). Residues Lys-68 and Lys-78 each participate in a glycyl lysine isopeptide (Lys-Gly) (interchain with G-Cter in SUMO2) cross-link. Omega-N-methylarginine occurs at positions 95, 97, and 99. Residues Lys-141, Lys-152, Lys-160, Lys-190, Lys-199, Lys-206, Lys-220, Lys-285, Lys-302, and Lys-396 each participate in a glycyl lysine isopeptide (Lys-Gly) (interchain with G-Cter in SUMO2) cross-link. Residues 191 to 244 (EESEEPEAKPFSAGPKEEDMEVDVPAVKVKEEPRDEEEEAKVKAPPRAARKTPG) form a disordered region.

This sequence belongs to the eukaryotic RPC4/POLR3D RNA polymerase subunit family. Component of the RNA polymerase III complex consisting of 17 subunits: a ten-subunit horseshoe-shaped catalytic core composed of POLR3A/RPC1, POLR3B/RPC2, POLR1C/RPAC1, POLR1D/RPAC2, POLR3K/RPC10, POLR2E/RPABC1, POLR2F/RPABC2, POLR2H/RPABC3, POLR2K/RPABC4 and POLR2L/RPABC5; a mobile stalk composed of two subunits POLR3H/RPC8 and CRCP/RPC9, protruding from the core and functioning primarily in transcription initiation; and additional subunits homologous to general transcription factors of the RNA polymerase II machinery, POLR3C/RPC3-POLR3F/RPC6-POLR3G/RPC7 heterotrimer required for transcription initiation and POLR3D/RPC4-POLR3E/RPC5 heterodimer involved in both transcription initiation and termination. Sumoylation on Lys-141 can serve as a signal to mark misfolded Pol III for proteasomal degradation.

Its subcellular location is the nucleus. Its function is as follows. DNA-dependent RNA polymerase catalyzes the transcription of DNA into RNA using the four ribonucleoside triphosphates as substrates. Specific peripheric component of RNA polymerase III (Pol III) which synthesizes small non-coding RNAs including 5S rRNA, snRNAs, tRNAs and miRNAs from at least 500 distinct genomic loci. Enables recruitment of Pol III at transcription initiation site and drives transcription initiation from both type 2 and type 3 DNA promoters. Required for efficient transcription termination and reinitiation. Pol III plays a key role in sensing and limiting infection by intracellular bacteria and DNA viruses. Acts as nuclear and cytosolic DNA sensor involved in innate immune response. Can sense non-self dsDNA that serves as template for transcription into dsRNA. The non-self RNA polymerase III transcripts, such as Epstein-Barr virus-encoded RNAs (EBERs) induce type I interferon and NF-kappa-B through the RIG-I pathway. The protein is DNA-directed RNA polymerase III subunit RPC4 of Mus musculus (Mouse).